The following is a 488-amino-acid chain: Endo-1,6-beta-D-glucanase neg1 (488 aa).

The first 17 residues, 1–17, serve as a signal peptide directing secretion; the sequence is MRISVGALLGLTALSHA. Catalysis depends on Glu-241, which acts as the Proton donor. Catalysis depends on Glu-337, which acts as the Nucleophile. The N-linked (GlcNAc...) asparagine glycan is linked to Asn-422.

Belongs to the glycosyl hydrolase 30 family.

It localises to the secreted. The catalysed reaction is Random hydrolysis of (1-&gt;6)-linkages in (1-&gt;6)-beta-D-glucans.. Endoglucanase that has highest activity on the linear beta-1,6-glucan pustulan and lower activity against laminarin (beta-1,3-glucans with beta-1,6-branches). Is active on C.albicans cell walls allowing the release of a previously described cell wall proteins. In Aspergillus fumigatus (strain ATCC MYA-4609 / CBS 101355 / FGSC A1100 / Af293) (Neosartorya fumigata), this protein is Endo-1,6-beta-D-glucanase neg1.